The following is a 393-amino-acid chain: Enoyl-[acyl-carrier-protein] reductase [NADH] (393 aa).

NAD(+) contacts are provided by residues 48 to 53 (GSSTGY), 74 to 75 (FE), 111 to 112 (DA), and 139 to 140 (LA). Residue Y225 participates in substrate binding. Y235 acts as the Proton donor in catalysis. NAD(+) contacts are provided by residues K244 and 273 to 275 (LVT).

It belongs to the TER reductase family. As to quaternary structure, monomer.

It carries out the reaction a 2,3-saturated acyl-[ACP] + NAD(+) = a (2E)-enoyl-[ACP] + NADH + H(+). It functions in the pathway lipid metabolism; fatty acid biosynthesis. Involved in the final reduction of the elongation cycle of fatty acid synthesis (FAS II). Catalyzes the reduction of a carbon-carbon double bond in an enoyl moiety that is covalently linked to an acyl carrier protein (ACP). This is Enoyl-[acyl-carrier-protein] reductase [NADH] from Pseudoalteromonas atlantica (strain T6c / ATCC BAA-1087).